Here is a 545-residue protein sequence, read N- to C-terminus: Glucose-6-phosphate isomerase (545 aa).

The Proton donor role is filled by Glu351. Catalysis depends on residues His382 and Lys510.

The protein belongs to the GPI family.

The protein resides in the cytoplasm. The catalysed reaction is alpha-D-glucose 6-phosphate = beta-D-fructose 6-phosphate. It functions in the pathway carbohydrate biosynthesis; gluconeogenesis. Its pathway is carbohydrate degradation; glycolysis; D-glyceraldehyde 3-phosphate and glycerone phosphate from D-glucose: step 2/4. Its function is as follows. Catalyzes the reversible isomerization of glucose-6-phosphate to fructose-6-phosphate. In Helicobacter pylori (strain HPAG1), this protein is Glucose-6-phosphate isomerase.